Reading from the N-terminus, the 218-residue chain is LexA repressor (218 aa).

The H-T-H motif DNA-binding region spans 31 to 51 (IREIQDGLRISSTSVVAYNLR). Active-site for autocatalytic cleavage activity residues include serine 137 and lysine 176.

The protein belongs to the peptidase S24 family. As to quaternary structure, homodimer.

It catalyses the reaction Hydrolysis of Ala-|-Gly bond in repressor LexA.. Represses a number of genes involved in the response to DNA damage (SOS response), including recA and lexA. In the presence of single-stranded DNA, RecA interacts with LexA causing an autocatalytic cleavage which disrupts the DNA-binding part of LexA, leading to derepression of the SOS regulon and eventually DNA repair. In Roseiflexus sp. (strain RS-1), this protein is LexA repressor.